An 895-amino-acid chain; its full sequence is MEVQLGLGRVYPRPPSKTYRGAFQNLFQSVREVIQNPGPRHPEAASAAPPGASLQQQQQQQQETSPRQQQQQQQGEDGSPQAHRRGPTGYLVLDEEQQPSQPQSAPECHPERGCVPEPGAAVAAGKGLPQQLPAPPDEDDSAAPSTLSLLGPTFPGLSSCSTDLKDILSEASTMQLLQQQQQEAVSEGSSSGRAREASGAPTSSKDNYLGGTSTISDSAKELCKAVSVSMGLGVEALEHLSPGEQLRGDCMYAPVLGVPPAVRPTPCAPLAECKGSLLDDSAGKSTEDTAEYSPFKGGYTKGLEGESLGCSGSAAAGSSGTLELPSTLSLYKSGALDEAAAYQSRDYYNFPLALAGPPPPPPPPHPHARIKLENPLDYGSAWAAAAAQCRYGDLASLHGAGAAGPGSGSPSAAASSSWHTLFTAEEGQLYGPCGGGGGGGGGGGGGAGEAGAVAPYGYTRPPQGLAGQEGDFTAPDVWYPGGMVSRVPYPSPTCVKSEMGPWMDSYSGPYGDMRLETARDHVLPIDYYFPPQKTCLICGDEASGCHYGALTCGSCKVFFKRAAEGKQKYLCASRNDCTIDKFRRKNCPSCRLRKCYEAGMTLGARKLKKLGNLKLQEEGEASSTTSPTEETAQKLTVSHIEGYECQPIFLNVLEAIEPGVVCAGHDNNQPDSFAALLSSLNELGERQLVHVVKWAKALPGFRNLHVDDQMAVIQYSWMGLMVFAMGWRSFTNVNSRMLYFAPDLVFNEYRMHKSRMYSQCVRMRHLSQEFGWLQITPQEFLCMKALLLFSIIPVDGLKNQKFFDELRMNYIKELDRIIACKRKNPTSCSRRFYQLTKLLDSVQPIARELHQFTFDLLIKSHMVSVDFPEMMAEIISVQVPKILSGKVKPIYFHTQ.

The segment at 1–533 (MEVQLGLGRV…PIDYYFPPQK (533 aa)) is modulating. The interval 1-562 (MEVQLGLGRV…GSCKVFFKRA (562 aa)) is interaction with ZNF318. Disordered regions lie at residues 33–150 (VIQN…LSLL) and 175–211 (QLLQ…YLGG). Composition is skewed to low complexity over residues 44–81 (AASA…GSPQ) and 175–200 (QLLQ…ASGA). Residue Ser-65 is modified to Phosphoserine; by CDK9. Ser-79 carries the phosphoserine modification. Polar residues predominate over residues 201–211 (PTSSKDNYLGG). Tyr-208 carries the phosphotyrosine; by CSK modification. Ser-241 is modified (phosphoserine). Position 252 is a phosphotyrosine; by CSK and TNK2 (Tyr-252). Phosphotyrosine; by CSK occurs at positions 292, 331, 342, and 347. Position 348 is a phosphotyrosine; by CSK and TNK2 (Tyr-348). Lys-371 participates in a covalent cross-link: Glycyl lysine isopeptide (Lys-Gly) (interchain with G-Cter in SUMO). Tyr-378 carries the phosphotyrosine; by CSK modification. A Glycyl lysine isopeptide (Lys-Gly) (interchain with G-Cter in SUMO) cross-link involves residue Lys-496. A phosphotyrosine; by CSK mark is found at Tyr-510 and Tyr-527. The tract at residues 527 to 894 (YYFPPQKTCL…GKVKPIYFHT (368 aa)) is interaction with LPXN. The segment at residues 534–607 (TCLICGDEAS…AGMTLGARKL (74 aa)) is a DNA-binding region (nuclear receptor). 2 consecutive NR C4-type zinc fingers follow at residues 535–555 (CLIC…CGSC) and 571–595 (CASR…LRKC). Residues 547–637 (YGALTCGSCK…TEETAQKLTV (91 aa)) are interaction with HIPK3. Positions 567 to 894 (QKYLCASRND…GKVKPIYFHT (328 aa)) are interaction with CCAR1. The tract at residues 600–894 (MTLGARKLKK…GKVKPIYFHT (295 aa)) is interaction with KAT7. Position 626 is a phosphoserine; by STK4/MST1 (Ser-626). Residues 644–875 (ECQPIFLNVL…DFPEMMAEII (232 aa)) form the NR LBD domain. Residues Asn-681 and Arg-728 each coordinate 17beta-hydroxy-5alpha-androstan-3-one. Residues Lys-821 and Lys-823 each participate in a glycyl lysine isopeptide (Lys-Gly) (interchain with G-Cter in ubiquitin) cross-link. 17beta-hydroxy-5alpha-androstan-3-one is bound at residue Thr-853. At Tyr-891 the chain carries Phosphotyrosine; by CSK.

Belongs to the nuclear hormone receptor family. NR3 subfamily. As to quaternary structure, binds DNA as a homodimer. Part of a ternary complex containing AR, EFCAB6/DJBP and PARK7. Interacts with HIPK3 and NR0B2 in the presence of androgen. The ligand binding domain interacts with KAT7/HBO1 in the presence of dihydrotestosterone. Interacts with EFCAB6/DJBP, PQBP1, RANBP9, RBAK, SPDEF, SRA1, TGFB1I1 and RREB1. Interacts with ZMIZ1/ZIMP10 and ZMIZ2/ZMIP7 which both enhance its transactivation activity. Interacts with SLC30A9 and RAD54L2/ARIP4. Interacts with MACROD1 (via macro domain). Interacts via the ligand-binding domain with LXXLL and FXXLF motifs from NCOA1, NCOA2, NCOA3 and MAGEA11. Interacts (via nuclear receptor DNA binding domain and nuclear receptor ligand binding domain) with NCOA4. The AR N-terminal poly-Gln region binds Ran resulting in enhancement of AR-mediated transactivation. Ran-binding decreases as the poly-Gln length increases. Interacts with HIP1 (via coiled coil domain). Interacts (via ligand-binding domain) with TRIM68. Interacts with TNK2. Interacts with USP26. Interacts with RNF6. Interacts (regulated by RNF6 probably through polyubiquitination) with RNF14; regulates AR transcriptional activity. Interacts with PRMT2 and TRIM24. Interacts with RACK1. Interacts with RANBP10; this interaction enhances dihydrotestosterone-induced AR transcriptional activity. Interacts with PRPF6 in a hormone-independent way; this interaction enhances dihydrotestosterone-induced AR transcriptional activity. Interacts with STK4/MST1. Interacts with ZIPK/DAPK3. Interacts with LPXN. Interacts with MAK. Part of a complex containing AR, MAK and NCOA3. Interacts with CRY1. Interacts with CCAR1 and GATA2. Interacts with ZNF318. Interacts with BUD31. Interacts with ARID4A. Interacts with ARID4B. Interacts (via NR LBD domain) with ZBTB7A; the interaction is direct and androgen-dependent. Interacts with NCOR1. Interacts with NCOR2. Interacts with CRY2 in a ligand-dependent manner. In terms of processing, phosphorylated in prostate cancer cells in response to several growth factors including EGF. Phosphorylation is induced by c-Src kinase (CSK). Tyr-510 is one of the major phosphorylation sites and an increase in phosphorylation and Src kinase activity is associated with prostate cancer progression. Phosphorylation by TNK2 enhances the DNA-binding and transcriptional activity. Phosphorylation at Ser-65 by CDK9 regulates AR promoter selectivity and cell growth. Sumoylated on Lys-371 (major) and Lys-496. Ubiquitinated. Deubiquitinated by USP26. 'Lys-6' and 'Lys-27'-linked polyubiquitination by RNF6 modulates AR transcriptional activity and specificity. Post-translationally, palmitoylated by ZDHHC7 and ZDHHC21. Palmitoylation is required for plasma membrane targeting and for rapid intracellular signaling via ERK and AKT kinases and cAMP generation.

It is found in the nucleus. It localises to the cytoplasm. Functionally, steroid hormone receptors are ligand-activated transcription factors that regulate eukaryotic gene expression and affect cellular proliferation and differentiation in target tissues. Transcription factor activity is modulated by bound coactivator and corepressor proteins like ZBTB7A that recruits NCOR1 and NCOR2 to the androgen response elements/ARE on target genes, negatively regulating androgen receptor signaling and androgen-induced cell proliferation. Transcription activation is also down-regulated by NR0B2. Activated, but not phosphorylated, by HIPK3 and ZIPK/DAPK3. This chain is Androgen receptor (AR), found in Macaca fascicularis (Crab-eating macaque).